The primary structure comprises 158 residues: Transcriptional repressor NrdR (158 aa).

The segment at 3 to 34 (CPYCGYPDSKVIDSRPTDDNTSIRRRRECLKC) is a zinc-finger region. Positions 49-139 (ILVIKKDNRR…VYRQFKDINT (91 aa)) constitute an ATP-cone domain.

Belongs to the NrdR family. Requires Zn(2+) as cofactor.

Negatively regulates transcription of bacterial ribonucleotide reductase nrd genes and operons by binding to NrdR-boxes. In Thermoanaerobacter pseudethanolicus (strain ATCC 33223 / 39E) (Clostridium thermohydrosulfuricum), this protein is Transcriptional repressor NrdR.